The primary structure comprises 76 residues: Small ribosomal subunit protein bS18 (76 aa).

Belongs to the bacterial ribosomal protein bS18 family. In terms of assembly, part of the 30S ribosomal subunit. Forms a tight heterodimer with protein bS6.

Binds as a heterodimer with protein bS6 to the central domain of the 16S rRNA, where it helps stabilize the platform of the 30S subunit. The protein is Small ribosomal subunit protein bS18 of Carboxydothermus hydrogenoformans (strain ATCC BAA-161 / DSM 6008 / Z-2901).